A 439-amino-acid chain; its full sequence is MHPFASYVLRSYYKATGWNEDNLYANLTRSSNAILDFTVPRGLHLTVSKSPNALFKTTYSMTAMPSLHGSVGYIFTSCDLDVKSSGNVRFKNMIERFKVYDQPRRPEPKEEEWLAGEQVQKRDYLLYGRFYLPTGRLDALYSTRLSPTVQALVAAISDPPSNIPSELRDRNGDPSNIMLNLQHDVGKWCTEYTWSAEDGMWGVRVLHNFGRLGMSDAVEDGGGGKGDRTVKVKRVDEEDAVEGGLKGRVSMGAELYFSAKERSAGVSTGIRFTTLPDATPPSFQVPSSSSSSSNPVSPSTSQPPTTITALFNPMLGHMSGAYTARVSRDLALSSRFDFNVYSYESEWTMGAEWWLRRSLTPRPSEDGEIHPPTPPPFPPPVEDVQGVVKARASTNNDVSLMWEGRLRNMLVSLGVVSDFSSRSKPIKAIGLEVSYFSSE.

Residues 275–305 are disordered; the sequence is LPDATPPSFQVPSSSSSSSNPVSPSTSQPPT. Low complexity predominate over residues 280–305; that stretch reads PPSFQVPSSSSSSSNPVSPSTSQPPT.

The protein belongs to the MDM10 family. Component of the ER-mitochondria encounter structure (ERMES) or MDM complex, composed of MMM1, MDM10, MDM12 and MDM34. Associates with the mitochondrial outer membrane sorting assembly machinery SAM(core) complex.

The protein resides in the mitochondrion outer membrane. Its function is as follows. Component of the ERMES/MDM complex, which serves as a molecular tether to connect the endoplasmic reticulum and mitochondria. Components of this complex are involved in the control of mitochondrial shape and protein biogenesis and may function in phospholipid exchange. MDM10 is involved in the late assembly steps of the general translocase of the mitochondrial outer membrane (TOM complex). Functions in the TOM40-specific route of the assembly of outer membrane beta-barrel proteins, including the association of TOM40 with the receptor TOM22 and small TOM proteins. Can associate with the SAM(core) complex as well as the MDM12-MMM1 complex, both involved in late steps of the major beta-barrel assembly pathway, that is responsible for biogenesis of all outer membrane beta-barrel proteins. May act as a switch that shuttles between both complexes and channels precursor proteins into the TOM40-specific pathway. Plays a role in mitochondrial morphology and in the inheritance of mitochondria. In Laccaria bicolor (strain S238N-H82 / ATCC MYA-4686) (Bicoloured deceiver), this protein is Mitochondrial distribution and morphology protein 10.